The sequence spans 122 residues: MARIAGVDLPRGKRVDIALTYIYGIGRATALQILDATGVNWTRNVDDLNADEVNEIRKEIEQNHKVEGDLRREISANIKRLMDIGCYRGLRHRRGLPVRGQRTHTNARTRKGPRRGTVGKKK.

The interval 95 to 122 (GLPVRGQRTHTNARTRKGPRRGTVGKKK) is disordered.

The protein belongs to the universal ribosomal protein uS13 family. In terms of assembly, part of the 30S ribosomal subunit. Forms a loose heterodimer with protein S19. Forms two bridges to the 50S subunit in the 70S ribosome.

In terms of biological role, located at the top of the head of the 30S subunit, it contacts several helices of the 16S rRNA. In the 70S ribosome it contacts the 23S rRNA (bridge B1a) and protein L5 of the 50S subunit (bridge B1b), connecting the 2 subunits; these bridges are implicated in subunit movement. Contacts the tRNAs in the A and P-sites. In Nitratidesulfovibrio vulgaris (strain ATCC 29579 / DSM 644 / CCUG 34227 / NCIMB 8303 / VKM B-1760 / Hildenborough) (Desulfovibrio vulgaris), this protein is Small ribosomal subunit protein uS13.